Here is a 296-residue protein sequence, read N- to C-terminus: Acetylglutamate kinase (296 aa).

Substrate-binding positions include 69–70 (GG), R91, and N193.

This sequence belongs to the acetylglutamate kinase family. ArgB subfamily.

It is found in the cytoplasm. The catalysed reaction is N-acetyl-L-glutamate + ATP = N-acetyl-L-glutamyl 5-phosphate + ADP. It participates in amino-acid biosynthesis; L-arginine biosynthesis; N(2)-acetyl-L-ornithine from L-glutamate: step 2/4. Catalyzes the ATP-dependent phosphorylation of N-acetyl-L-glutamate. The sequence is that of Acetylglutamate kinase from Verminephrobacter eiseniae (strain EF01-2).